Consider the following 293-residue polypeptide: 4-hydroxy-tetrahydrodipicolinate synthase (293 aa).

Residue Thr-47 participates in pyruvate binding. Catalysis depends on Tyr-135, which acts as the Proton donor/acceptor. The active-site Schiff-base intermediate with substrate is the Lys-164. Residue Ile-205 coordinates pyruvate.

It belongs to the DapA family. In terms of assembly, homotetramer; dimer of dimers.

Its subcellular location is the cytoplasm. It catalyses the reaction L-aspartate 4-semialdehyde + pyruvate = (2S,4S)-4-hydroxy-2,3,4,5-tetrahydrodipicolinate + H2O + H(+). It participates in amino-acid biosynthesis; L-lysine biosynthesis via DAP pathway; (S)-tetrahydrodipicolinate from L-aspartate: step 3/4. Its function is as follows. Catalyzes the condensation of (S)-aspartate-beta-semialdehyde [(S)-ASA] and pyruvate to 4-hydroxy-tetrahydrodipicolinate (HTPA). In Symbiobacterium thermophilum (strain DSM 24528 / JCM 14929 / IAM 14863 / T), this protein is 4-hydroxy-tetrahydrodipicolinate synthase.